Reading from the N-terminus, the 261-residue chain is Kallikrein-1E2 (261 aa).

The signal sequence occupies residues 1–17 (MWFLVLCLDLSLGETGA). Residues 18–24 (LPPIQSR) constitute a propeptide, activation peptide. The Peptidase S1 domain maps to 25 to 258 (IIGGWECEKH…HLKWIKETIE (234 aa)). 5 disulfide bridges follow: C31/C173, C50/C66, C152/C219, C184/C198, and C209/C234. Catalysis depends on H65, which acts as the Charge relay system. An N-linked (GlcNAc...) asparagine glycan is attached at N79. The active-site Charge relay system is D120. Catalysis depends on S213, which acts as the Charge relay system.

The protein belongs to the peptidase S1 family. Kallikrein subfamily. Detected in prostate and semen.

The protein resides in the secreted. The catalysed reaction is Preferential cleavage of Arg-|-Xaa bonds in small molecule substrates. Highly selective action to release kallidin (lysyl-bradykinin) from kininogen involves hydrolysis of Met-|-Xaa or Leu-|-Xaa.. Its function is as follows. Glandular kallikreins cleave Met-Lys and Arg-Ser bonds in kininogen to release Lys-bradykinin. This Equus caballus (Horse) protein is Kallikrein-1E2 (KLK1E2).